We begin with the raw amino-acid sequence, 37 residues long: Large ribosomal subunit protein bL36c (37 aa).

It belongs to the bacterial ribosomal protein bL36 family.

Its subcellular location is the plastid. The protein localises to the chloroplast. This Euglena gracilis protein is Large ribosomal subunit protein bL36c (rpl36).